A 213-amino-acid polypeptide reads, in one-letter code: Probable lipid phosphate phosphatase beta (213 aa).

Helical transmembrane passes span 30–50 (PFLP…RFSF), 67–87 (VPFL…KLIF), 118–138 (VFFV…SMTG), 158–178 (VEVV…RILL), and 181–201 (HYVL…LFAL).

This sequence belongs to the PA-phosphatase related phosphoesterase family.

It localises to the membrane. The protein is Probable lipid phosphate phosphatase beta (LPPB) of Arabidopsis thaliana (Mouse-ear cress).